Here is a 996-residue protein sequence, read N- to C-terminus: Alanine--tRNA ligase, chloroplastic/mitochondrial (996 aa).

The Zn(2+) site is built by histidine 677, histidine 681, cysteine 779, and histidine 783.

It belongs to the class-II aminoacyl-tRNA synthetase family. Monomer. Zn(2+) is required as a cofactor.

It is found in the plastid. Its subcellular location is the chloroplast. It localises to the mitochondrion. The catalysed reaction is tRNA(Ala) + L-alanine + ATP = L-alanyl-tRNA(Ala) + AMP + diphosphate. Its function is as follows. Catalyzes the attachment of alanine to tRNA(Ala) in a two-step reaction: alanine is first activated by ATP to form Ala-AMP and then transferred to the acceptor end of tRNA(Ala). Also edits incorrectly charged tRNA(Ala) via its editing domain. The protein is Alanine--tRNA ligase, chloroplastic/mitochondrial of Oryza sativa subsp. indica (Rice).